The chain runs to 520 residues: GMP synthase [glutamine-hydrolyzing] (520 aa).

Residues 9–202 form the Glutamine amidotransferase type-1 domain; sequence TILIIDFGSQ…VHRIVGVKPG (194 aa). The active-site Nucleophile is the Cys86. Active-site residues include His176 and Glu178. Residues 203–395 enclose the GMPS ATP-PPase domain; it reads WTMGAYREQA…LGLPDSFIGR (193 aa). 230–236 contacts ATP; it reads SGGVDSS.

In terms of assembly, homodimer.

The catalysed reaction is XMP + L-glutamine + ATP + H2O = GMP + L-glutamate + AMP + diphosphate + 2 H(+). It participates in purine metabolism; GMP biosynthesis; GMP from XMP (L-Gln route): step 1/1. Its function is as follows. Catalyzes the synthesis of GMP from XMP. This chain is GMP synthase [glutamine-hydrolyzing], found in Brucella abortus (strain S19).